A 157-amino-acid polypeptide reads, in one-letter code: Small ribosomal subunit protein uS7 (157 aa).

This sequence belongs to the universal ribosomal protein uS7 family. Part of the 30S ribosomal subunit. Contacts proteins S9 and S11.

Functionally, one of the primary rRNA binding proteins, it binds directly to 16S rRNA where it nucleates assembly of the head domain of the 30S subunit. Is located at the subunit interface close to the decoding center, probably blocks exit of the E-site tRNA. In Roseiflexus sp. (strain RS-1), this protein is Small ribosomal subunit protein uS7.